The primary structure comprises 427 residues: MALRCINNLEIFLRRCTAPTLHRCCVASSRTAHTASSSKGSGGDNSKDQENNGQNKSGYRRFGWRSVFQFCVPFSLGALVSAVLIEGHRDELTPTISARSLKGRRNEFNFIADVVAGCGDSVVYIEIKDTRHFDYFSGQPITASNGSGFVIEQNGLILTNAHVVINKPHTMVQVRLSDGRTFPATIEDVDQTSDLATLRIHVSGLPVMKLGKSSTLRSGEWVVALGSPLALSNTVTAGVISATQRASQELGLRNRDINYLQTDAAITFGNSGGPLVNLDGEAIGVNSMKVTAGISFAIPIDYVKVFLERAAERRKKGSAHKTGYPVKRYMGITMLTLTPDILFELKSRSQNMPNNLMHGVLVWKVIVGSPAHSGGLQPGDIVTHINKKEIKNSSDVYDALAEGRKDLEIVILRGVKQMHVKITPEDP.

The interval 33–57 (HTASSSKGSGGDNSKDQENNGQNKS) is disordered. The helical transmembrane segment at 67–87 (VFQFCVPFSLGALVSAVLIEG) threads the bilayer. Residues 78 to 81 (ALVS) carry the IAP-binding motif. The interval 144–307 (SNGSGFVIEQ…IPIDYVKVFL (164 aa)) is serine protease. Active-site charge relay system residues include H162, D194, and S271. Residues 330 to 415 (MGITMLTLTP…DLEIVILRGV (86 aa)) enclose the PDZ domain.

The protein belongs to the peptidase S1C family. Interacts with th/DIAP1 (via BIR 2 domain).

Its subcellular location is the mitochondrion intermembrane space. The protein localises to the mitochondrion membrane. The catalysed reaction is Cleavage of non-polar aliphatic amino-acids at the P1 position, with a preference for Val, Ile and Met. At the P2 and P3 positions, Arg is selected most strongly with a secondary preference for other hydrophilic residues.. Its function is as follows. Serine protease that shows proteolytic activity against a non-specific substrate beta-casein. Promotes or induces cell death either by direct binding to and inhibition of BIRC proteins (also called inhibitor of apoptosis proteins, IAPs), leading to an increase in caspase activity, or by a BIRC inhibition-independent, caspase-independent and serine protease activity-dependent mechanism. Can antagonize antiapoptotic activity of th/Diap1 by directly inducing the degradation of th/Diap1. In Drosophila persimilis (Fruit fly), this protein is Serine protease HTRA2, mitochondrial.